Consider the following 250-residue polypeptide: Petrobactin import ATP-binding protein FatE (250 aa).

An ABC transporter domain is found at 2–236; that stretch reads IKIDNVKKFY…TLLTDIFETR (235 aa). 34 to 41 is a binding site for ATP; the sequence is GPNGAGKS.

It belongs to the ABC transporter superfamily. In terms of assembly, the complex is composed of two ATP-binding proteins (FatE), two transmembrane proteins (FatC and FatD) and a solute-binding protein (FpuA).

The protein resides in the cell membrane. It carries out the reaction a Fe(III)-siderophore(out) + ATP + H2O = a Fe(III)-siderophore(in) + ADP + phosphate + H(+). Part of an ABC transporter complex involved in ferric-petrobactin uptake. Probably responsible for energy coupling to the transport system. This chain is Petrobactin import ATP-binding protein FatE, found in Bacillus anthracis.